The primary structure comprises 675 residues: Probable potassium transport system protein Kup (675 aa).

A compositionally biased stretch (basic and acidic residues) spans 1–12; sequence MEPAMPEHDGDH. A disordered region spans residues 1–25; the sequence is MEPAMPEHDGDHASNPPHGVGIPND. The next 12 membrane-spanning stretches (helical) occupy residues 62-82, 104-124, 153-173, 195-215, 222-242, 255-275, 300-320, 332-352, 390-410, 419-439, 450-470, and 472-492; these read ALLAVLGVVYGDIGTSPLYAL, LASLTFWALMLIVTIKYVILI, WLFGLVGIAGTCLFFGDSIIT, IIIPLAMVVLVALFSVQVLGT, FGPIMVCWFSVLAILGIKGIF, FALEFIVLHGYLSFIALGSVV, WLFFVLPSLTLNYFGQAALLI, LLVPHWAQIPMLVLATFATVI, IYLPSLNWILAFGALVLVLAF, AYGIAVTGTFLCTCVLAMVVF, VAIVFGFFFIVDSIFFSANVL, and IPDGGWVPLAIGIISTIIMTT.

It belongs to the HAK/KUP transporter (TC 2.A.72) family.

It is found in the cell inner membrane. It carries out the reaction K(+)(in) + H(+)(in) = K(+)(out) + H(+)(out). Functionally, transport of potassium into the cell. Likely operates as a K(+):H(+) symporter. The sequence is that of Probable potassium transport system protein Kup from Gluconobacter oxydans (strain 621H) (Gluconobacter suboxydans).